The sequence spans 101 residues: Large ribosomal subunit protein uL24c (101 aa).

The protein belongs to the universal ribosomal protein uL24 family. In terms of assembly, part of the 50S ribosomal subunit.

It localises to the plastid. The protein resides in the chloroplast. Functionally, one of two assembly initiator proteins, it binds directly to the 5'-end of the 23S rRNA, where it nucleates assembly of the 50S subunit. The polypeptide is Large ribosomal subunit protein uL24c (rpl24) (Guillardia theta (Cryptophyte)).